Consider the following 261-residue polypeptide: Kallikrein-1E2 (261 aa).

Positions 1 to 17 are cleaved as a signal peptide; it reads MWFLVLCLDLSLGETGA. Positions 18–24 are cleaved as a propeptide — activation peptide; that stretch reads LPPIQSR. Residues 25–258 form the Peptidase S1 domain; sequence IIGGWECEKH…HLKWIKETIE (234 aa). Intrachain disulfides connect cysteine 31/cysteine 173, cysteine 50/cysteine 66, cysteine 152/cysteine 219, cysteine 184/cysteine 198, and cysteine 209/cysteine 234. The Charge relay system role is filled by histidine 65. Residue asparagine 79 is glycosylated (N-linked (GlcNAc...) asparagine). Catalysis depends on aspartate 120, which acts as the Charge relay system. The active-site Charge relay system is the serine 213.

Belongs to the peptidase S1 family. Kallikrein subfamily. Detected in prostate and semen.

Its subcellular location is the secreted. It carries out the reaction Preferential cleavage of Arg-|-Xaa bonds in small molecule substrates. Highly selective action to release kallidin (lysyl-bradykinin) from kininogen involves hydrolysis of Met-|-Xaa or Leu-|-Xaa.. Its function is as follows. Glandular kallikreins cleave Met-Lys and Arg-Ser bonds in kininogen to release Lys-bradykinin. This is Kallikrein-1E2 (KLK1E2) from Equus caballus (Horse).